A 75-amino-acid chain; its full sequence is Brevinin-2SN2 (75 aa).

The N-terminal stretch at 1-22 (MFTLKKPLLFLFFLGTISLSFC) is a signal peptide. Positions 23 to 40 (EEERGADEDDGGEMTEEE) are cleaved as a propeptide — removed in mature form. The cysteines at positions 69 and 75 are disulfide-linked.

This sequence belongs to the frog skin active peptide (FSAP) family. Brevinin subfamily. As to expression, expressed by the skin glands.

Its subcellular location is the secreted. Functionally, antimicrobial peptide. Active against some Gram-negative and a variety of Gram-positive bacterial strains. Active against fungus C.glabrata 090902 but not against C.albicans ATCC 10231. Shows hemolytic activity against human erythrocytes. The chain is Brevinin-2SN2 from Sylvirana spinulosa (Fine-spined frog).